The sequence spans 157 residues: Protein Smg (157 aa).

The protein belongs to the Smg family.

The sequence is that of Protein Smg from Escherichia coli O6:H1 (strain CFT073 / ATCC 700928 / UPEC).